Here is a 108-residue protein sequence, read N- to C-terminus: UPF0145 protein LCA_1282 (108 aa).

It belongs to the UPF0145 family.

This Latilactobacillus sakei subsp. sakei (strain 23K) (Lactobacillus sakei subsp. sakei) protein is UPF0145 protein LCA_1282.